The following is a 412-amino-acid chain: UPF0754 membrane protein MAE_37850 (412 aa).

2 helical membrane-spanning segments follow: residues 3–23 (LPTLWTWILPPIAGAIIGYFT) and 387–407 (IVNLGGILGLLVGLMQTIILI).

Belongs to the UPF0754 family.

The protein localises to the cell inner membrane. This Microcystis aeruginosa (strain NIES-843 / IAM M-2473) protein is UPF0754 membrane protein MAE_37850.